The following is a 629-amino-acid chain: uncharacterized protein (629 aa).

Disordered regions lie at residues 101–126, 172–209, 315–339, and 448–468; these read SWKKSSSHPKSKEVSNGLLKVSTPPT, PQKDNQGFSKSKHLSTYEGETENGFSTSTEEEEEEEED, STPKKSFGQTPRIKTELSESPNSQR, and GENTANNGYGPQTLNETSEEP. The segment covering 200–209 has biased composition (acidic residues); sequence TEEEEEEEED. Residue serine 334 is modified to Phosphoserine. Polar residues predominate over residues 448–463; it reads GENTANNGYGPQTLNE.

This is an uncharacterized protein from Schizosaccharomyces pombe (strain 972 / ATCC 24843) (Fission yeast).